The sequence spans 353 residues: Stearoyl-CoA desaturase 4 (353 aa).

A disordered region spans residues 1-42; that stretch reads MTAHLPQEISSRCSTTNIMEPHSRRQQDGEEKMPLQAEDIRP. Over 1-66 the chain is Cytoplasmic; the sequence is MTAHLPQEIS…EGPPPKLEYV (66 aa). A compositionally biased stretch (polar residues) spans 8–18; sequence EISSRCSTTNI. Over residues 21 to 42 the composition is skewed to basic and acidic residues; it reads PHSRRQQDGEEKMPLQAEDIRP. The helical transmembrane segment at 67–87 threads the bilayer; the sequence is WRNIIFMALLHVGALYGITLV. Residue Asn69 participates in substrate binding. Over 88-91 the chain is Lumenal; sequence PSCK. A helical transmembrane segment spans residues 92–112; sequence VYTWLLGVFYNVVAGLGITAG. The Cytoplasmic segment spans residues 113–211; the sequence is AHRLWSHRTY…EKLVMFQRRY (99 aa). 2 residues coordinate Fe cation: His114 and His119. A Histidine box-1 motif is present at residues 114–119; sequence HRLWSH. The substrate site is built by Asn142, Arg149, and Asp150. Residues His151, His154, and His155 each coordinate Fe cation. The Histidine box-2 signature appears at 151-155; that stretch reads HRAHH. Residues Arg182 and Lys183 each coordinate substrate. The helical transmembrane segment at 212 to 231 threads the bilayer; sequence YKLAVTLMFIILPTLVPWYL. The Lumenal segment spans residues 232–235; it reads WGET. A helical membrane pass occupies residues 236–257; sequence FQHSLCVSNFLRYAVLLNFTWL. Trp256 is a binding site for substrate. At 258–353 the chain is on the cytoplasmic side; the sequence is VNSAAHLYGY…RTGDGSHKSS (96 aa). Fe cation contacts are provided by His263, His292, His295, and His296. Positions 292-296 match the Histidine box-3 motif; that stretch reads HNYHH.

This sequence belongs to the fatty acid desaturase type 1 family. Fe(2+) serves as cofactor. As to expression, detected in heart, but not in brain, liver, skin or adipose tissue.

The protein resides in the endoplasmic reticulum membrane. It is found in the microsome membrane. It catalyses the reaction octadecanoyl-CoA + 2 Fe(II)-[cytochrome b5] + O2 + 2 H(+) = (9Z)-octadecenoyl-CoA + 2 Fe(III)-[cytochrome b5] + 2 H2O. The catalysed reaction is hexadecanoyl-CoA + 2 Fe(II)-[cytochrome b5] + O2 + 2 H(+) = (9Z)-hexadecenoyl-CoA + 2 Fe(III)-[cytochrome b5] + 2 H2O. Functionally, stearoyl-CoA desaturase that utilizes O(2) and electrons from reduced cytochrome b5 to introduce the first double bond into saturated fatty acyl-CoA substrates. Catalyzes the insertion of a cis double bond at the delta-9 position into fatty acyl-CoA substrates including palmitoyl-CoA and stearoyl-CoA. Required for the biosynthesis of membrane phospholipids, cholesterol esters and triglycerides. This is Stearoyl-CoA desaturase 4 from Mus musculus (Mouse).